The following is a 673-amino-acid chain: Fatty acyl-CoA synthetase B (673 aa).

The signal sequence occupies residues 1–18 (MINNWLAVGLLVVSGILA). N-linked (GlcNAc...) asparagine glycosylation occurs at Asn-267.

It belongs to the ATP-dependent AMP-binding enzyme family.

Its subcellular location is the endoplasmic reticulum. The enzyme catalyses a long-chain fatty acid + ATP + CoA = a long-chain fatty acyl-CoA + AMP + diphosphate. Its function is as follows. Long chain fatty acid acyl-CoA synthetases catalyze the formation of a thiester bond between a free fatty acid and coenzyme A during fatty acid metabolic process. The sequence is that of Fatty acyl-CoA synthetase B (fcsB) from Dictyostelium discoideum (Social amoeba).